The chain runs to 215 residues: Pyrrolidone-carboxylate peptidase (215 aa).

Active-site residues include Glu-80, Cys-143, and His-167.

Belongs to the peptidase C15 family. Homotetramer.

It localises to the cytoplasm. The catalysed reaction is Release of an N-terminal pyroglutamyl group from a polypeptide, the second amino acid generally not being Pro.. Removes 5-oxoproline from various penultimate amino acid residues except L-proline. In Bacillus cytotoxicus (strain DSM 22905 / CIP 110041 / 391-98 / NVH 391-98), this protein is Pyrrolidone-carboxylate peptidase.